The primary structure comprises 555 residues: T-complex protein 1 subunit gamma (555 aa).

The tract at residues 527–555 (KKKQAPGSGPSKPTIETEGDADNEQILPD) is disordered.

The protein belongs to the TCP-1 chaperonin family. Heterooligomeric complex of about 850 to 900 kDa that forms two stacked rings, 12 to 16 nm in diameter. Interacts with CCT8.

It is found in the cytoplasm. Its function is as follows. Molecular chaperone; assists the folding of proteins upon ATP hydrolysis. Known to play a role, in vitro, in the folding of actin and tubulin. In Arabidopsis thaliana (Mouse-ear cress), this protein is T-complex protein 1 subunit gamma.